The chain runs to 554 residues: NADH-quinone oxidoreductase subunit N 3 (554 aa).

The next 14 helical transmembrane spans lie at 35–55, 65–85, 105–125, 161–181, 187–207, 222–242, 275–295, 322–342, 345–365, 371–391, 398–418, 442–462, 476–496, and 525–545; these read LMPV…EAFV, LFLT…LAAG, PTLF…FTFA, GFTT…LLVF, LLTL…LCAV, YFLL…LLYG, ALLL…VGAV, VAAF…LAWD, PVMW…AITQ, LLAY…IAAS, VLFY…VVTL, VAAV…TSGF, GAGA…FFYI, and IAVG…FLDL.

The protein belongs to the complex I subunit 2 family. In terms of assembly, NDH-1 is composed of 14 different subunits. Subunits NuoA, H, J, K, L, M, N constitute the membrane sector of the complex.

The protein localises to the cell membrane. The enzyme catalyses a quinone + NADH + 5 H(+)(in) = a quinol + NAD(+) + 4 H(+)(out). NDH-1 shuttles electrons from NADH, via FMN and iron-sulfur (Fe-S) centers, to quinones in the respiratory chain. The immediate electron acceptor for the enzyme in this species is believed to be a menaquinone. Couples the redox reaction to proton translocation (for every two electrons transferred, four hydrogen ions are translocated across the cytoplasmic membrane), and thus conserves the redox energy in a proton gradient. In Streptomyces griseus subsp. griseus (strain JCM 4626 / CBS 651.72 / NBRC 13350 / KCC S-0626 / ISP 5235), this protein is NADH-quinone oxidoreductase subunit N 3.